A 432-amino-acid chain; its full sequence is D-amino acid dehydrogenase (432 aa).

V3–Y17 serves as a coordination point for FAD.

The protein belongs to the DadA oxidoreductase family. It depends on FAD as a cofactor.

It catalyses the reaction a D-alpha-amino acid + A + H2O = a 2-oxocarboxylate + AH2 + NH4(+). The protein operates within amino-acid degradation; D-alanine degradation; NH(3) and pyruvate from D-alanine: step 1/1. Its function is as follows. Oxidative deamination of D-amino acids. The polypeptide is D-amino acid dehydrogenase (Delftia acidovorans (strain DSM 14801 / SPH-1)).